The sequence spans 259 residues: Anti-Pycsar protein Apyc1 (259 aa).

The interval 21-233 is beta-lactamase-like; sequence YNNSALVTFT…KQQNKIFLMH (213 aa). Zn(2+) is bound by residues His64, His66, Asp68, His69, His154, Asp178, and His233.

Belongs to the anti-Pycsar protein Apyc1 family. As to quaternary structure, homodimer. Zn(2+) serves as cofactor.

It carries out the reaction 3',5'-cyclic CMP + H2O = CMP + H(+). The enzyme catalyses 3',5'-cyclic UMP + H2O = UMP + H(+). In terms of biological role, counteracts the host Pycsar antiviral defense system. Phosphodiesterase that enables metal-dependent hydrolysis of host cyclic nucleotide Pycsar defense signals such as cCMP and cUMP. In Bacillus phage vB_BveM-Goe7, this protein is Anti-Pycsar protein Apyc1.